The primary structure comprises 273 residues: 4-hydroxy-tetrahydrodipicolinate reductase (273 aa).

Residue 12–17 (GAMGRM) coordinates NAD(+). K39 is a binding site for NADP(+). NAD(+)-binding positions include 102 to 104 (GTT) and 126 to 129 (ASNF). H159 serves as the catalytic Proton donor/acceptor. (S)-2,3,4,5-tetrahydrodipicolinate is bound at residue H160. The Proton donor role is filled by K163. 169–170 (GT) contributes to the (S)-2,3,4,5-tetrahydrodipicolinate binding site.

It belongs to the DapB family. In terms of assembly, homotetramer.

The protein localises to the cytoplasm. The enzyme catalyses (S)-2,3,4,5-tetrahydrodipicolinate + NAD(+) + H2O = (2S,4S)-4-hydroxy-2,3,4,5-tetrahydrodipicolinate + NADH + H(+). The catalysed reaction is (S)-2,3,4,5-tetrahydrodipicolinate + NADP(+) + H2O = (2S,4S)-4-hydroxy-2,3,4,5-tetrahydrodipicolinate + NADPH + H(+). It participates in amino-acid biosynthesis; L-lysine biosynthesis via DAP pathway; (S)-tetrahydrodipicolinate from L-aspartate: step 4/4. Functionally, catalyzes the conversion of 4-hydroxy-tetrahydrodipicolinate (HTPA) to tetrahydrodipicolinate. This is 4-hydroxy-tetrahydrodipicolinate reductase from Buchnera aphidicola subsp. Schizaphis graminum (strain Sg).